The primary structure comprises 261 residues: tRNA (guanine-N(7)-)-methyltransferase (261 aa).

S-adenosyl-L-methionine contacts are provided by E75, E100, D127, and D150. The active site involves D150. Substrate is bound at residue K154. An interaction with RNA region spans residues 156–161 (RHNKRR). Substrate contacts are provided by residues D186 and 223–226 (THFE).

This sequence belongs to the class I-like SAM-binding methyltransferase superfamily. TrmB family.

It catalyses the reaction guanosine(46) in tRNA + S-adenosyl-L-methionine = N(7)-methylguanosine(46) in tRNA + S-adenosyl-L-homocysteine. Its pathway is tRNA modification; N(7)-methylguanine-tRNA biosynthesis. Catalyzes the formation of N(7)-methylguanine at position 46 (m7G46) in tRNA. The polypeptide is tRNA (guanine-N(7)-)-methyltransferase (Xanthomonas campestris pv. campestris (strain 8004)).